The following is an 85-amino-acid chain: U4-theraphotoxin-Hhn1c (85 aa).

The first 22 residues, 1–22 (MKVTLIAIVTCAAVLVLHTTAA), serve as a signal peptide directing secretion. Residues 23-48 (EELEAESQLMEVGMPDTELAAVDEER) constitute a propeptide that is removed on maturation. Cystine bridges form between Cys52–Cys66, Cys56–Cys77, and Cys71–Cys82.

Belongs to the neurotoxin 12 (Hwtx-2) family. 02 (Hwtx-2) subfamily. As to expression, expressed by the venom gland.

The protein localises to the secreted. Postsynaptic neurotoxin. The protein is U4-theraphotoxin-Hhn1c of Cyriopagopus hainanus (Chinese bird spider).